Reading from the N-terminus, the 379-residue chain is Stimulator of interferon genes protein (379 aa).

2 helical membrane-spanning segments follow: residues 18–38 (AKKAAFVLLSVCLVVLWDLGE) and 43–63 (ILQWLMLHLASLQLGLLFKGV). Residues Cys88 and Cys91 are each lipidated (S-palmitoyl cysteine). A run of 2 helical transmembrane segments spans residues 89–109 (LGCPIRCGTLLLLSCYFYTPF) and 114–134 (HLPFTWTLALLGLSQALSILL). The cyclic dinucleotide-binding domain (CBD) stretch occupies residues 153–340 (LNVAQGMAWS…RHLKQEEKEE (188 aa)). Residues Ser162, Tyr167, Arg238, and Thr263 each contribute to the 2',3'-cGAMP site. 3',3'-c-di-GMP is bound by residues Ser162, Tyr167, 238–241 (RVYT), and Thr263. Residues Tyr167, Arg238, and Thr263 each coordinate 2',3'-cUAMP. Residues 338 to 363 (KEEVTVDSARTSVMPDPSMLPQGPEL) are disordered. The segment at 340-379 (EVTVDSARTSVMPDPSMLPQGPELLISSMDQPLPLRTDVF) is C-terminal tail (CTT). A Phosphoserine modification is found at Ser355. The pLxIS motif motif lies at 363-366 (LLIS). A Phosphoserine; by TBK1 modification is found at Ser366.

This sequence belongs to the STING family. In terms of assembly, homodimer; forms a homodimer in absence of cyclic nucleotide (c-di-GMP or cGAMP). Homotetramer; in presence of cyclic nucleotide (c-di-GMP or cGAMP), forms tetramers and higher-order oligomers through side-by-side packing. Interacts (when phosphorylated) with IRF3; following activation and phosphorylation on the pLxIS motif by TBK1, recruits IRF3. Interacts with TBK1; when homodimer, leading to subsequent production of IFN-beta. Interacts (via transmembrane domain) with TMEM203. Post-translationally, phosphorylation by TBK1 leads to activation and production of IFN-beta. Following cyclic nucleotide (c-di-GMP or cGAMP)-binding, activation and translocation from the endoplasmic reticulum, STING1 is phosphorylated by TBK1 at Ser-366 in the pLxIS motif. The phosphorylated pLxIS motif constitutes an IRF3-binding motif, leading to recruitment of the transcription factor IRF3 to induce type-I interferons and other cytokines. In contrast, lacks phosphorylation site at position 358, leading to reduced production of type-I interferons and other cytokines.

Its subcellular location is the endoplasmic reticulum membrane. It is found in the cytoplasm. The protein resides in the perinuclear region. The protein localises to the endoplasmic reticulum-Golgi intermediate compartment membrane. It localises to the golgi apparatus membrane. Its subcellular location is the cytoplasmic vesicle. It is found in the autophagosome membrane. The protein resides in the mitochondrion outer membrane. The protein localises to the cell membrane. The catalysed reaction is H(+)(in) = H(+)(out). Facilitator of innate immune signaling that acts as a sensor of cytosolic DNA from bacteria and viruses and promotes low production of type I interferon (IFN-alpha and IFN-beta). Compared to other mammals, STING1-dependent type I interferon induction is strongly reduced in bats, suggesting that the cGAS-STING pathway promotes a limited inflammatory response. Innate immune response is triggered in response to non-CpG double-stranded DNA from viruses and bacteria delivered to the cytoplasm. Acts by binding cyclic dinucleotides: recognizes and binds cyclic di-GMP (c-di-GMP), a second messenger produced by bacteria, cyclic UMP-AMP (2',3'-cUAMP), and cyclic GMP-AMP (cGAMP), a messenger produced by CGAS in response to DNA virus in the cytosol. Upon binding to c-di-GMP, cUAMP or cGAMP, STING1 oligomerizes, translocates from the endoplasmic reticulum and is phosphorylated by TBK1 on the pLxIS motif, leading to recruitment and subsequent activation of the transcription factor IRF3 to induce expression of type I interferon and exert a potent anti-viral state. In addition to promote the production of type I interferons, plays a direct role in autophagy. Following cGAMP-binding, STING1 buds from the endoplasmic reticulum into COPII vesicles, which then form the endoplasmic reticulum-Golgi intermediate compartment (ERGIC). The ERGIC serves as the membrane source for WIPI2 recruitment and LC3 lipidation, leading to formation of autophagosomes that target cytosolic DNA or DNA viruses for degradation by the lysosome. Promotes autophagy by acting as a proton channel that directs proton efflux from the Golgi to facilitate MAP1LC3B/LC3B lipidation. The autophagy- and interferon-inducing activities can be uncoupled and autophagy induction is independent of TBK1 phosphorylation. The polypeptide is Stimulator of interferon genes protein (Pteronotus parnellii (Parnell's mustached bat)).